Here is a 217-residue protein sequence, read N- to C-terminus: Ribosomal large subunit pseudouridine synthase E (217 aa).

Residues His19 to Arg28 are compositionally biased toward polar residues. The disordered stretch occupies residues His19–Pro38. Catalysis depends on Asp79, which acts as the Nucleophile.

Belongs to the pseudouridine synthase RsuA family.

It catalyses the reaction uridine(2457) in 23S rRNA = pseudouridine(2457) in 23S rRNA. Its function is as follows. Responsible for synthesis of pseudouridine from uracil-2457 in 23S ribosomal RNA. In Escherichia coli O157:H7, this protein is Ribosomal large subunit pseudouridine synthase E (rluE).